We begin with the raw amino-acid sequence, 144 residues long: MESKEYRKLEYNYKAFLIFSKVAMLTFLTVGIGAIFTPQTYPIMPTIGFIVVAGIVSLIGMTIGALIIHQQYETLPANEKLEFKQKLLPEAYYICIELFGYGSLVLLYNTFTSNNPTLCVMSLLMAGLFILVVLVIWYFGYKSY.

The next 4 helical transmembrane spans lie at 16 to 36 (FLIF…GAIF), 48 to 68 (GFIV…ALII), 87 to 107 (LLPE…LVLL), and 120 to 140 (VMSL…WYFG).

It is found in the cell membrane. This is an uncharacterized protein from Methanocaldococcus jannaschii (strain ATCC 43067 / DSM 2661 / JAL-1 / JCM 10045 / NBRC 100440) (Methanococcus jannaschii).